We begin with the raw amino-acid sequence, 341 residues long: MLKDGTSVSNEVIQWKCVEFRIESKRLHYGRFVISPFKKGQANTVGIAMRRALLGEVGGASITSARFEGVAHEYSTVAGIQETIHDILVNLKEIVLRSDSDGNQKAILSVTGPKRVTAGDISLPPSVKVIDDSQYIVTITQPISVNIELNIECDCGYRIESLNEYRDGEFPVDAVFMPVRNVNYSVHPFGSGKEMREILFIEVWTNGSLTPTEAISKASKSSIDLLSPFLHTKHEDIPDFESNRDSSSLMKFSSRVDDVDKSEGDFFKNTFIDQLELPARAFNCLKRAEIHTISDLLSYSRDDLLKLKSFGKKSVDQVSRALWERFATELPNEKPRVVGDE.

The alpha N-terminal domain (alpha-NTD) stretch occupies residues 1 to 233 (MLKDGTSVSN…DLLSPFLHTK (233 aa)). An alpha C-terminal domain (alpha-CTD) region spans residues 262-341 (SEGDFFKNTF…NEKPRVVGDE (80 aa)).

Belongs to the RNA polymerase alpha chain family. In plastids the minimal PEP RNA polymerase catalytic core is composed of four subunits: alpha, beta, beta', and beta''. When a (nuclear-encoded) sigma factor is associated with the core the holoenzyme is formed, which can initiate transcription.

The protein resides in the plastid. It localises to the chloroplast. It catalyses the reaction RNA(n) + a ribonucleoside 5'-triphosphate = RNA(n+1) + diphosphate. Functionally, DNA-dependent RNA polymerase catalyzes the transcription of DNA into RNA using the four ribonucleoside triphosphates as substrates. This Marsilea quadrifolia (European water clover) protein is DNA-directed RNA polymerase subunit alpha.